The chain runs to 203 residues: A-type ATP synthase subunit E (203 aa).

Belongs to the V-ATPase E subunit family. In terms of assembly, has multiple subunits with at least A(3), B(3), C, D, E, F, H, I and proteolipid K(x).

It is found in the cell membrane. Component of the A-type ATP synthase that produces ATP from ADP in the presence of a proton gradient across the membrane. The chain is A-type ATP synthase subunit E from Thermococcus onnurineus (strain NA1).